The following is a 37-amino-acid chain: Large ribosomal subunit protein bL36B (37 aa).

This sequence belongs to the bacterial ribosomal protein bL36 family.

The polypeptide is Large ribosomal subunit protein bL36B (Aeromonas salmonicida (strain A449)).